Reading from the N-terminus, the 155-residue chain is Large ribosomal subunit protein uL16m (155 aa).

Belongs to the universal ribosomal protein uL16 family.

The protein resides in the mitochondrion. In Petunia hybrida (Petunia), this protein is Large ribosomal subunit protein uL16m (RPL16).